We begin with the raw amino-acid sequence, 382 residues long: Dual-specificity RNA methyltransferase RlmN (382 aa).

E95 (proton acceptor) is an active-site residue. The region spanning E101–D349 is the Radical SAM core domain. A disulfide bridge connects residues C108 and C354. The [4Fe-4S] cluster site is built by C115, C119, and C122. S-adenosyl-L-methionine-binding positions include G180–E181, S212, S234–H236, and N311. C354 serves as the catalytic S-methylcysteine intermediate.

This sequence belongs to the radical SAM superfamily. RlmN family. [4Fe-4S] cluster serves as cofactor.

The protein localises to the cytoplasm. The enzyme catalyses adenosine(2503) in 23S rRNA + 2 reduced [2Fe-2S]-[ferredoxin] + 2 S-adenosyl-L-methionine = 2-methyladenosine(2503) in 23S rRNA + 5'-deoxyadenosine + L-methionine + 2 oxidized [2Fe-2S]-[ferredoxin] + S-adenosyl-L-homocysteine. It carries out the reaction adenosine(37) in tRNA + 2 reduced [2Fe-2S]-[ferredoxin] + 2 S-adenosyl-L-methionine = 2-methyladenosine(37) in tRNA + 5'-deoxyadenosine + L-methionine + 2 oxidized [2Fe-2S]-[ferredoxin] + S-adenosyl-L-homocysteine. Functionally, specifically methylates position 2 of adenine 2503 in 23S rRNA and position 2 of adenine 37 in tRNAs. m2A2503 modification seems to play a crucial role in the proofreading step occurring at the peptidyl transferase center and thus would serve to optimize ribosomal fidelity. The sequence is that of Dual-specificity RNA methyltransferase RlmN from Paraburkholderia phymatum (strain DSM 17167 / CIP 108236 / LMG 21445 / STM815) (Burkholderia phymatum).